A 1485-amino-acid polypeptide reads, in one-letter code: Chromosome partition protein MukB (1485 aa).

34-41 is an ATP binding site; sequence GGNGAGKS. Coiled coils occupy residues 311–480 and 519–665; these read EMAR…EAYR and GARL…RLSQ. The segment at 666–783 is flexible hinge; it reads PGGAEDARLI…SLPLFGRAAR (118 aa). 2 coiled-coil regions span residues 832–1115 and 1209–1265; these read NDPE…QAKA and IDAI…LQSV.

This sequence belongs to the SMC family. MukB subfamily. In terms of assembly, homodimerization via its hinge domain. Binds to DNA via its C-terminal region. Interacts, and probably forms a ternary complex, with MukE and MukF via its C-terminal region. The complex formation is stimulated by calcium or magnesium. Interacts with tubulin-related protein FtsZ.

It localises to the cytoplasm. Its subcellular location is the nucleoid. Its function is as follows. Plays a central role in chromosome condensation, segregation and cell cycle progression. Functions as a homodimer, which is essential for chromosome partition. Involved in negative DNA supercoiling in vivo, and by this means organize and compact chromosomes. May achieve or facilitate chromosome segregation by condensation DNA from both sides of a centrally located replisome during cell division. This chain is Chromosome partition protein MukB, found in Edwardsiella ictaluri (strain 93-146).